A 213-amino-acid chain; its full sequence is Nicolin-1 (213 aa).

Part of the neuronal tubulin polyglutamylase complex which contains TPGS1, TPGS2, TTLL1, LRRC49 and NICN1. In terms of tissue distribution, high expression level is found in brain, testis, liver and kidney. Weak expression in spleen, leukocytes, small intestin and colon.

It is found in the nucleus. This Mus musculus (Mouse) protein is Nicolin-1 (Nicn1).